We begin with the raw amino-acid sequence, 397 residues long: Tryptophan synthase beta chain (397 aa).

Residue lysine 87 is modified to N6-(pyridoxal phosphate)lysine.

The protein belongs to the TrpB family. In terms of assembly, tetramer of two alpha and two beta chains. Pyridoxal 5'-phosphate is required as a cofactor.

It carries out the reaction (1S,2R)-1-C-(indol-3-yl)glycerol 3-phosphate + L-serine = D-glyceraldehyde 3-phosphate + L-tryptophan + H2O. It participates in amino-acid biosynthesis; L-tryptophan biosynthesis; L-tryptophan from chorismate: step 5/5. Functionally, the beta subunit is responsible for the synthesis of L-tryptophan from indole and L-serine. In Escherichia fergusonii (strain ATCC 35469 / DSM 13698 / CCUG 18766 / IAM 14443 / JCM 21226 / LMG 7866 / NBRC 102419 / NCTC 12128 / CDC 0568-73), this protein is Tryptophan synthase beta chain.